A 550-amino-acid chain; its full sequence is U-box domain-containing protein 40 (550 aa).

A compositionally biased stretch (basic and acidic residues) spans 19–29; sequence KSDNLSRRESL. Residues 19–55 are disordered; the sequence is KSDNLSRRESLAGKSKWRTSLSRSSSSSSSNNNSPTK. The segment covering 38–52 has biased composition (low complexity); that stretch reads SLSRSSSSSSSNNNS. Residues 57–127 enclose the U-box domain; that stretch reads EIPAEFLCPI…HSWCERRCFP (71 aa). 5 ARM repeats span residues 260 to 299, 301 to 340, 342 to 381, 383 to 420, and 422 to 464; these read ESSR…NLSL, KSNK…SLAL, DENK…HLSL, QSNR…NMAS, and PVSR…GLSH.

It catalyses the reaction S-ubiquitinyl-[E2 ubiquitin-conjugating enzyme]-L-cysteine + [acceptor protein]-L-lysine = [E2 ubiquitin-conjugating enzyme]-L-cysteine + N(6)-ubiquitinyl-[acceptor protein]-L-lysine.. The protein operates within protein modification; protein ubiquitination. Functionally, functions as an E3 ubiquitin ligase. The chain is U-box domain-containing protein 40 (PUB40) from Arabidopsis thaliana (Mouse-ear cress).